The following is a 232-amino-acid chain: Large ribosomal subunit protein uL1 (232 aa).

This sequence belongs to the universal ribosomal protein uL1 family. In terms of assembly, part of the 50S ribosomal subunit.

In terms of biological role, binds directly to 23S rRNA. The L1 stalk is quite mobile in the ribosome, and is involved in E site tRNA release. Protein L1 is also a translational repressor protein, it controls the translation of the L11 operon by binding to its mRNA. The chain is Large ribosomal subunit protein uL1 from Clostridium novyi (strain NT).